Here is a 509-residue protein sequence, read N- to C-terminus: Hyaluronidase PH-20 (509 aa).

The signal sequence occupies residues 1 to 35 (MGVLKFKHIFFRSFVKSSGVSQIVFTFLLIPCCLT). Disulfide bonds link C60-C351 and C224-C238. Residue N82 is glycosylated (N-linked (GlcNAc...) asparagine). E148 (proton donor) is an active-site residue. N-linked (GlcNAc...) asparagine glycosylation is found at N166, N235, N254, and N368. Disulfide bonds link C376/C387, C381/C435, and C437/C464. An N-linked (GlcNAc...) asparagine glycan is attached at N393. S490 is lipidated: GPI-anchor amidated serine. Positions 491-509 (ATMFIVSILFLIISSVASL) are cleaved as a propeptide — removed in mature form.

The protein belongs to the glycosyl hydrolase 56 family. Post-translationally, N-glycosylated. In terms of tissue distribution, testis.

It localises to the cell membrane. It catalyses the reaction Random hydrolysis of (1-&gt;4)-linkages between N-acetyl-beta-D-glucosamine and D-glucuronate residues in hyaluronate.. Functionally, involved in sperm-egg adhesion. Upon fertilization sperm must first penetrate a layer of cumulus cells that surrounds the egg before reaching the zona pellucida. The cumulus cells are embedded in a matrix containing hyaluronic acid which is formed prior to ovulation. This protein aids in penetrating the layer of cumulus cells by digesting hyaluronic acid. The chain is Hyaluronidase PH-20 (SPAM1) from Homo sapiens (Human).